Consider the following 426-residue polypeptide: MKLKSRFTSIIGVITLFFSQTVTAESDVVISVDEGVSMAQPIAVVPFKANGGVPADVGQIIADDLRNSGKFTPVERSKLPAQPGSAAEVNSQQWTDIGVDSVVVGQVTPTGGGYNVAYQLVDTLSNPATVLAQGAFNVPAAQIRQGAHTVSDQVFEKITQIRGAFRTKIAYVVQRGVSSYELRVSDYDGYNAFTVVKSKEPLMSPEWSPDGSRLAYVTFENKKAQVVVHDLRSGSRRVVAALRGHNGAPAFSPDGSRIAFASNQDGELDIYVVGANGGKPSKLTANAGNNTEPSWSPDGSTIYFTSDRAGSPQVYRMGSSGGGASPMGGSGSYNAKVSSDGKNLIMIAGDKVVKRDLASGGTEVLSSTFLDESPSISPNGIMVIYSSTKGTSKVLQLVSADGRFKANLPGAGGQFKFPAWSPYLTK.

An N-terminal signal peptide occupies residues 1–24; sequence MKLKSRFTSIIGVITLFFSQTVTA.

It belongs to the TolB family. As to quaternary structure, the Tol-Pal system is composed of five core proteins: the inner membrane proteins TolA, TolQ and TolR, the periplasmic protein TolB and the outer membrane protein Pal. They form a network linking the inner and outer membranes and the peptidoglycan layer.

The protein localises to the periplasm. Its function is as follows. Part of the Tol-Pal system, which plays a role in outer membrane invagination during cell division and is important for maintaining outer membrane integrity. This is Tol-Pal system protein TolB from Actinobacillus pleuropneumoniae serotype 5b (strain L20).